The chain runs to 164 residues: Large ribosomal subunit protein uL10 (164 aa).

The protein belongs to the universal ribosomal protein uL10 family. Part of the ribosomal stalk of the 50S ribosomal subunit. The N-terminus interacts with L11 and the large rRNA to form the base of the stalk. The C-terminus forms an elongated spine to which L12 dimers bind in a sequential fashion forming a multimeric L10(L12)X complex.

Its function is as follows. Forms part of the ribosomal stalk, playing a central role in the interaction of the ribosome with GTP-bound translation factors. This chain is Large ribosomal subunit protein uL10, found in Chromobacterium violaceum (strain ATCC 12472 / DSM 30191 / JCM 1249 / CCUG 213 / NBRC 12614 / NCIMB 9131 / NCTC 9757 / MK).